Reading from the N-terminus, the 334-residue chain is Adenosine deaminase (334 aa).

Residues H12 and H14 each coordinate Zn(2+). Substrate contacts are provided by H14, D16, and G170. Zn(2+) is bound at residue H197. E200 (proton donor) is an active-site residue. D278 provides a ligand contact to Zn(2+). D279 contributes to the substrate binding site.

This sequence belongs to the metallo-dependent hydrolases superfamily. Adenosine and AMP deaminases family. Adenosine deaminase subfamily. The cofactor is Zn(2+).

The catalysed reaction is adenosine + H2O + H(+) = inosine + NH4(+). The enzyme catalyses 2'-deoxyadenosine + H2O + H(+) = 2'-deoxyinosine + NH4(+). Catalyzes the hydrolytic deamination of adenosine and 2-deoxyadenosine. This chain is Adenosine deaminase, found in Yersinia pseudotuberculosis serotype O:1b (strain IP 31758).